A 434-amino-acid chain; its full sequence is Histidinol dehydrogenase (434 aa).

Residues Tyr130, Gln188, and Asn211 each contribute to the NAD(+) site. Positions 237, 259, and 262 each coordinate substrate. Residues Gln259 and His262 each contribute to the Zn(2+) site. Active-site proton acceptor residues include Glu326 and His327. 4 residues coordinate substrate: His327, Asp360, Glu414, and His419. Residue Asp360 coordinates Zn(2+). Residue His419 participates in Zn(2+) binding.

This sequence belongs to the histidinol dehydrogenase family. As to quaternary structure, homodimer. It depends on Zn(2+) as a cofactor.

It carries out the reaction L-histidinol + 2 NAD(+) + H2O = L-histidine + 2 NADH + 3 H(+). It functions in the pathway amino-acid biosynthesis; L-histidine biosynthesis; L-histidine from 5-phospho-alpha-D-ribose 1-diphosphate: step 9/9. Catalyzes the sequential NAD-dependent oxidations of L-histidinol to L-histidinaldehyde and then to L-histidine. This is Histidinol dehydrogenase from Shigella boydii serotype 4 (strain Sb227).